Consider the following 101-residue polypeptide: Large ribosomal subunit protein eL21 (101 aa).

The segment covering 1–18 (MVKHSRGYRTRSRSLLRK) has biased composition (basic residues). Residues 1–23 (MVKHSRGYRTRSRSLLRKSPRER) are disordered.

It belongs to the eukaryotic ribosomal protein eL21 family.

The protein is Large ribosomal subunit protein eL21 of Saccharolobus islandicus (strain Y.G.57.14 / Yellowstone #1) (Sulfolobus islandicus).